The sequence spans 177 residues: Probable DNA-directed RNA polymerase subunit delta (177 aa).

One can recognise an HTH HARE-type domain in the interval 14–83 (LSMIEVARAI…GENKWGLRSW (70 aa)). Composition is skewed to acidic residues over residues 117–134 (GDDDAIDYGHDDPEDEDN) and 142–157 (EYDDENPDDEKDEVES). The tract at residues 117 to 164 (GDDDAIDYGHDDPEDEDNYPGSVSSEYDDENPDDEKDEVESYDQKSTK) is disordered.

Belongs to the RpoE family. In terms of assembly, RNAP is composed of a core of 2 alpha, a beta and a beta' subunits. The core is associated with a delta subunit and one of several sigma factors.

In terms of biological role, participates in both the initiation and recycling phases of transcription. In the presence of the delta subunit, RNAP displays an increased specificity of transcription, a decreased affinity for nucleic acids, and an increased efficiency of RNA synthesis because of enhanced recycling. This Streptococcus suis (strain 98HAH33) protein is Probable DNA-directed RNA polymerase subunit delta.